Here is a 286-residue protein sequence, read N- to C-terminus: ATP synthase gamma chain (286 aa).

It belongs to the ATPase gamma chain family. In terms of assembly, F-type ATPases have 2 components, CF(1) - the catalytic core - and CF(0) - the membrane proton channel. CF(1) has five subunits: alpha(3), beta(3), gamma(1), delta(1), epsilon(1). CF(0) has three main subunits: a, b and c.

It localises to the cell inner membrane. Its function is as follows. Produces ATP from ADP in the presence of a proton gradient across the membrane. The gamma chain is believed to be important in regulating ATPase activity and the flow of protons through the CF(0) complex. The chain is ATP synthase gamma chain from Teredinibacter turnerae (strain ATCC 39867 / T7901).